The primary structure comprises 159 residues: Phosphopantetheine adenylyltransferase (159 aa).

Residue S9 coordinates substrate. ATP contacts are provided by residues 9–10 (SF) and H17. 3 residues coordinate substrate: K41, L74, and K88. Residues 89 to 91 (GLR), E99, and 123 to 129 (YGYISST) contribute to the ATP site.

The protein belongs to the bacterial CoaD family. Homohexamer. Mg(2+) serves as cofactor.

The protein resides in the cytoplasm. It carries out the reaction (R)-4'-phosphopantetheine + ATP + H(+) = 3'-dephospho-CoA + diphosphate. It participates in cofactor biosynthesis; coenzyme A biosynthesis; CoA from (R)-pantothenate: step 4/5. Reversibly transfers an adenylyl group from ATP to 4'-phosphopantetheine, yielding dephospho-CoA (dPCoA) and pyrophosphate. The chain is Phosphopantetheine adenylyltransferase from Corynebacterium diphtheriae (strain ATCC 700971 / NCTC 13129 / Biotype gravis).